The chain runs to 355 residues: Methyltransferase FUS9 (355 aa).

Tyrosine 18, asparagine 63, aspartate 86, serine 123, and phenylalanine 124 together coordinate S-adenosyl-L-homocysteine. Residue phenylalanine 231 participates in Mg(2+) binding.

The protein belongs to the methyltransferase superfamily. Type-7 methyltransferase family. Mg(2+) is required as a cofactor.

Its pathway is mycotoxin biosynthesis. Methyltransferase; part of the gene cluster that mediates the biosynthesis of the mycotoxin fusarin C. Within the cluster, FUS1, FUS2, FUS8 and FUS9 are sufficient for fusarin production. The roles of the other FUS members are yet undetermined. The fusarin C synthetase FUS1 is responsible for the condensation of one acetyl-coenzyme A (CoA) unit with six malonyl-CoA units and the amide linkage of the arising heptaketide and homoserine, subsequently releasing the first intermediate, prefusarin, as an alcohol with an open ring structure. The cytochrome P450 monooxygenase FUS8 participates in multiple oxidation processes at carbon C-20 and is able to use the FUS1 product as substrate, resulting in formation of 20-hydroxy-prefusarin. This reaction seems to be essential before the 2-pyrrolidone ring closure can be catalyzed by FUS2, generating 20-hydroxy-fusarin. FUS8 is able to further oxidizes carbon C-20 after ring closure, resulting in the formation of carboxy-fusarin C. As the last step, FUS9 methylates the hydroxyl group at C-21 to generate fusarin C. Fusarin C can then rearrange to epi-fusarin C, the (z)-isomers, and fusarin A and fusarin D. This Gibberella moniliformis (strain M3125 / FGSC 7600) (Maize ear and stalk rot fungus) protein is Methyltransferase FUS9.